Reading from the N-terminus, the 76-residue chain is Putative cation transport regulator ChaB (76 aa).

Belongs to the ChaB family. Monomer.

In terms of biological role, might be a regulator of the sodium-potassium/proton antiporter ChaA. The chain is Putative cation transport regulator ChaB from Escherichia coli O157:H7.